A 171-amino-acid polypeptide reads, in one-letter code: Co-chaperone protein HscB (171 aa).

One can recognise a J domain in the interval 2–74 (DYFTLFGLPA…LTRAEYLLSL (73 aa)).

It belongs to the HscB family. As to quaternary structure, interacts with HscA and stimulates its ATPase activity. Interacts with IscU.

Functionally, co-chaperone involved in the maturation of iron-sulfur cluster-containing proteins. Seems to help targeting proteins to be folded toward HscA. In Klebsiella pneumoniae subsp. pneumoniae (strain ATCC 700721 / MGH 78578), this protein is Co-chaperone protein HscB.